Reading from the N-terminus, the 1193-residue chain is Laminin subunit gamma-2 (1193 aa).

The signal sequence occupies residues 1–21 (MPALWLGCCLCFSLLLPAARA). 12 cysteine pairs are disulfide-bonded: Cys-28-Cys-37, Cys-30-Cys-53, Cys-56-Cys-65, Cys-68-Cys-81, Cys-84-Cys-96, Cys-86-Cys-102, Cys-104-Cys-113, Cys-116-Cys-128, Cys-139-Cys-150, Cys-141-Cys-155, Cys-157-Cys-166, and Cys-169-Cys-184. Laminin EGF-like domains lie at 28-83 (CDCN…RCLP), 84-130 (CNCN…GCTQ), and 139-186 (CDCD…GCTQ). One can recognise a Laminin EGF-like 4; first part domain in the interval 187 to 196 (CFCYGHSASC). Residues 213-381 (QDVDGWKAVQ…SGAPAPWVEQ (169 aa)) enclose the Laminin IV type A domain. Residues Asn-342 and Asn-362 are each glycosylated (N-linked (GlcNAc...) asparagine). The region spanning 382–415 (CICPVGYKGQFCQDCASGYKRDSARLGPFGTCIP) is the Laminin EGF-like 4; second part domain. 3 consecutive Laminin EGF-like domains span residues 416-461 (CNCQ…SCKP), 462-516 (CPCH…PCQP), and 517-572 (CQCN…KCRA). Cystine bridges form between Cys-462–Cys-470, Cys-464–Cys-481, Cys-484–Cys-493, Cys-496–Cys-514, Cys-517–Cys-531, Cys-519–Cys-538, Cys-541–Cys-550, Cys-553–Cys-570, Cys-573–Cys-585, Cys-575–Cys-591, and Cys-593–Cys-602. In terms of domain architecture, Laminin EGF-like 8; truncated spans 573 to 602 (CNCNPMGSEPVGCRSDGTCVCKPGFGGPNC). The tract at residues 603–1193 (EHGAFSCPAC…CYNTQALEQQ (591 aa)) is domain II and I. Residues 611–718 (ACYNQVKIQM…GSQYQNRVRD (108 aa)) are a coiled coil. O-linked (Xyl...) (chondroitin sulfate) serine glycans are attached at residues Ser-803 and Ser-805. Coiled coils occupy residues 811–1076 (AVVQ…AVQM) and 1117–1193 (EEGL…LEQQ). N-linked (GlcNAc...) asparagine glycans are attached at residues Asn-942 and Asn-1033.

Laminin is a complex glycoprotein, consisting of three different polypeptide chains (alpha, beta, gamma), which are bound to each other by disulfide bonds into a cross-shaped molecule comprising one long and three short arms with globules at each end. Gamma-2 is a subunit of laminin-5 (laminin-332 or epiligrin/kalinin/nicein). O-glycosylated; contains chondroitin sulfate (CS). CS attachment is on either Ser-803 or Ser-805. The large variant is expressed only in specific epithelial cells of embryonic and neonatal tissues. In 17-week old embryo the small variant is found in cerebral cortex, lung, and distal tubes of kidney, but not in epithelia except for distal tubuli.

The protein localises to the secreted. It localises to the extracellular space. It is found in the extracellular matrix. The protein resides in the basement membrane. Functionally, binding to cells via a high affinity receptor, laminin is thought to mediate the attachment, migration and organization of cells into tissues during embryonic development by interacting with other extracellular matrix components. Ladsin exerts cell-scattering activity toward a wide variety of cells, including epithelial, endothelial, and fibroblastic cells. The protein is Laminin subunit gamma-2 (LAMC2) of Homo sapiens (Human).